A 633-amino-acid polypeptide reads, in one-letter code: Probably inactive receptor-like protein kinase At2g46850 (633 aa).

An N-terminal signal peptide occupies residues 1–28 (MPPLFLPSSSSALFLLLLLLLTLQTLTS). The Extracellular segment spans residues 29–285 (ISLSQPQALR…IKKHNGKKLT (257 aa)). N-linked (GlcNAc...) asparagine glycosylation is found at Asn45, Asn69, and Asn231. Residues 286–306 (VLAGVLAPLFILGSLLALFCL) traverse the membrane as a helical segment. The Cytoplasmic segment spans residues 307–633 (LKRPVTSHKD…SPDSIYLPKT (327 aa)). In terms of domain architecture, Protein kinase spans 355–633 (FQDSQKLTQG…SPDSIYLPKT (279 aa)). Residues 361–369 (LTQGKTGTI) and Lys384 contribute to the ATP site.

The protein belongs to the protein kinase superfamily. Ser/Thr protein kinase family.

The protein resides in the membrane. This Arabidopsis thaliana (Mouse-ear cress) protein is Probably inactive receptor-like protein kinase At2g46850.